Here is a 450-residue protein sequence, read N- to C-terminus: Envelope glycoprotein M (450 aa).

At 1–31 (MARRGAAVAEEPLLPSSGIVGIGPIEGINWR) the chain is on the intravirion side. A helical transmembrane segment spans residues 32-52 (TWLVQVFCFALTTSVLFITLV). Residues 53–101 (TASLPQTGYPCFYGSLVDYTQKNHSVVDGVWMRQIAGGVAPTLFLETTS) lie on the Virion surface side of the membrane. The chain crosses the membrane as a helical span at residues 102 to 122 (LVAFLYYTTLVLVAISFYLII). At 123–153 (SAVLVRRYARGKECTAVAGCTRPTTTLIASH) the chain is on the intravirion side. Residues 154-174 (VTLVLGTLATWLLQVVILLLS) form a helical membrane-spanning segment. The Virion surface segment spans residues 175 to 178 (HKQA). Residues 179-199 (VLGAAVYVVHFVSLVFFCMSF) traverse the membrane as a helical segment. The Intravirion segment spans residues 200–236 (SGLGTASAQYSSNLRILKTNLPALHKMAGPGRAVMTN). Residues 237 to 257 (LGMGMLGISLPILSLMLGIIL) form a helical membrane-spanning segment. Residues 258 to 270 (ANSFHITLWQTVT) lie on the Virion surface side of the membrane. A helical transmembrane segment spans residues 271 to 291 (VAVGVFVALGLMFLIIVELIV). Residues 292-294 (SHY) lie on the Intravirion side of the membrane. The helical transmembrane segment at 295 to 315 (VHVLVGPALAVLVASSTLAVA) threads the bilayer. Residues 316-334 (THSYFVHFHAMVSVQAPNL) are Virion surface-facing. The helical transmembrane segment at 335–355 (ATASKAIVGIMAVISIIMLVV) threads the bilayer. The Intravirion segment spans residues 356–450 (RLVRAIMFHK…PERSHRREYR (95 aa)).

It belongs to the herpesviridae glycoprotein M family. As to quaternary structure, interacts (via N-terminus) with gN (via N-terminus). The gM-gN heterodimer forms the gCII complex.

It localises to the virion membrane. It is found in the host Golgi apparatus. The protein resides in the host trans-Golgi network. The protein localises to the host endosome membrane. Its subcellular location is the host nucleus inner membrane. Functionally, envelope glycoprotein important for virion assembly and egress. Plays a role in the correct incorporation of gH-gL into virion membrane. Directs the glycoprotein N (gN) to the host trans-Golgi network. In Equus caballus (Horse), this protein is Envelope glycoprotein M.